A 206-amino-acid polypeptide reads, in one-letter code: Holliday junction branch migration complex subunit RuvA (206 aa).

The segment at 1 to 64 (MIGRLHGIII…EDAQLLYGFN (64 aa)) is domain I. The segment at 65 to 143 (TRQERTLFRE…GWISHDLFTP (79 aa)) is domain II. The segment at 144–157 (YTDAAPVDHEPSLA) is flexible linker. Residues 158 to 206 (PADTVESEAVAALLALGYKPQQASLVVSKVIKPEMTVENVIREALRSML) form a domain III region.

Belongs to the RuvA family. As to quaternary structure, homotetramer. Forms an RuvA(8)-RuvB(12)-Holliday junction (HJ) complex. HJ DNA is sandwiched between 2 RuvA tetramers; dsDNA enters through RuvA and exits via RuvB. An RuvB hexamer assembles on each DNA strand where it exits the tetramer. Each RuvB hexamer is contacted by two RuvA subunits (via domain III) on 2 adjacent RuvB subunits; this complex drives branch migration. In the full resolvosome a probable DNA-RuvA(4)-RuvB(12)-RuvC(2) complex forms which resolves the HJ.

Its subcellular location is the cytoplasm. Functionally, the RuvA-RuvB-RuvC complex processes Holliday junction (HJ) DNA during genetic recombination and DNA repair, while the RuvA-RuvB complex plays an important role in the rescue of blocked DNA replication forks via replication fork reversal (RFR). RuvA specifically binds to HJ cruciform DNA, conferring on it an open structure. The RuvB hexamer acts as an ATP-dependent pump, pulling dsDNA into and through the RuvAB complex. HJ branch migration allows RuvC to scan DNA until it finds its consensus sequence, where it cleaves and resolves the cruciform DNA. The protein is Holliday junction branch migration complex subunit RuvA of Tolumonas auensis (strain DSM 9187 / NBRC 110442 / TA 4).